Consider the following 261-residue polypeptide: Monopolin complex subunit pcs1 (261 aa).

The interval 1–42 (MRKNNMQTSKDSELKEQAKGKSSKLIHKLPKQRTRISQGQMH) is disordered. Positions 10–19 (KDSELKEQAK) are enriched in basic and acidic residues. Over residues 21–34 (KSSKLIHKLPKQRT) the composition is skewed to basic residues. Residues 91-170 (HTQEQEFNEL…EQIKNYSKIN (80 aa)) are a coiled coil.

As to quaternary structure, component of a monopolin-like complex composed of pcs1 and mde4. The complex associates with the kinetochore.

The protein resides in the nucleus. Its subcellular location is the nucleolus. It localises to the chromosome. The protein localises to the centromere. The monopolin-like pcs1/mde4 complex is essential for accurate chromosome segregation during mitosis and meiosis II. May clamp together microtubule binding sites on the same kinetochore, preventing merotelic attachment of microtubules. In contrast to its S.cerevisiae ortholog CSM1, is not required ofr mono-orientation during meiosis I. The chain is Monopolin complex subunit pcs1 (pcs1) from Schizosaccharomyces pombe (strain 972 / ATCC 24843) (Fission yeast).